The primary structure comprises 536 residues: Phosphoenolpyruvate carboxykinase (ATP) (536 aa).

Residues R61, Y195, and K201 each contribute to the substrate site. Residues K201, H220, and 236 to 244 (GLSGTGKTT) each bind ATP. Residues K201 and H220 each coordinate Mn(2+). Residue D257 coordinates Mn(2+). Residues E285, R322, and T447 each contribute to the ATP site. R322 contributes to the substrate binding site.

Belongs to the phosphoenolpyruvate carboxykinase (ATP) family. Mn(2+) is required as a cofactor.

The protein resides in the cytoplasm. The enzyme catalyses oxaloacetate + ATP = phosphoenolpyruvate + ADP + CO2. Its pathway is carbohydrate biosynthesis; gluconeogenesis. Its function is as follows. Involved in the gluconeogenesis. Catalyzes the conversion of oxaloacetate (OAA) to phosphoenolpyruvate (PEP) through direct phosphoryl transfer between the nucleoside triphosphate and OAA. The sequence is that of Phosphoenolpyruvate carboxykinase (ATP) from Sinorhizobium medicae (strain WSM419) (Ensifer medicae).